Reading from the N-terminus, the 203-residue chain is Pyridoxal 5'-phosphate synthase subunit PdxT (203 aa).

52 to 54 (GES) lines the L-glutamine pocket. Cys84 serves as the catalytic Nucleophile. L-glutamine is bound by residues Arg116 and 144 to 145 (IR). Active-site charge relay system residues include His184 and Glu186.

It belongs to the glutaminase PdxT/SNO family. In terms of assembly, in the presence of PdxS, forms a dodecamer of heterodimers. Only shows activity in the heterodimer.

It catalyses the reaction aldehydo-D-ribose 5-phosphate + D-glyceraldehyde 3-phosphate + L-glutamine = pyridoxal 5'-phosphate + L-glutamate + phosphate + 3 H2O + H(+). The catalysed reaction is L-glutamine + H2O = L-glutamate + NH4(+). It participates in cofactor biosynthesis; pyridoxal 5'-phosphate biosynthesis. Catalyzes the hydrolysis of glutamine to glutamate and ammonia as part of the biosynthesis of pyridoxal 5'-phosphate. The resulting ammonia molecule is channeled to the active site of PdxS. The chain is Pyridoxal 5'-phosphate synthase subunit PdxT from Aeropyrum pernix (strain ATCC 700893 / DSM 11879 / JCM 9820 / NBRC 100138 / K1).